Here is a 219-residue protein sequence, read N- to C-terminus: N-(5'-phosphoribosyl)anthranilate isomerase (219 aa).

The protein belongs to the TrpF family.

It catalyses the reaction N-(5-phospho-beta-D-ribosyl)anthranilate = 1-(2-carboxyphenylamino)-1-deoxy-D-ribulose 5-phosphate. It functions in the pathway amino-acid biosynthesis; L-tryptophan biosynthesis; L-tryptophan from chorismate: step 3/5. This is N-(5'-phosphoribosyl)anthranilate isomerase from Bradyrhizobium sp. (strain BTAi1 / ATCC BAA-1182).